Reading from the N-terminus, the 347-residue chain is Phenylalanine--tRNA ligase alpha subunit (347 aa).

Mg(2+) is bound at residue E265.

The protein belongs to the class-II aminoacyl-tRNA synthetase family. Phe-tRNA synthetase alpha subunit type 1 subfamily. As to quaternary structure, tetramer of two alpha and two beta subunits. Mg(2+) is required as a cofactor.

It is found in the cytoplasm. It carries out the reaction tRNA(Phe) + L-phenylalanine + ATP = L-phenylalanyl-tRNA(Phe) + AMP + diphosphate + H(+). In Wolbachia sp. subsp. Brugia malayi (strain TRS), this protein is Phenylalanine--tRNA ligase alpha subunit.